Reading from the N-terminus, the 1960-residue chain is Myosin-9 (1960 aa).

An N-acetylalanine modification is found at Ala-2. A mediates interaction with LIMCH1 region spans residues 2-838 (AQQAADKYLY…RLFTKVKPLL (837 aa)). Lys-8 is modified (N6-acetyllysine). The residue at position 11 (Tyr-11) is a Phosphotyrosine. The Myosin N-terminal SH3-like domain maps to 27 to 77 (AAKKLVWVPSDKSGFEPASLKEEVGEEAIVELVENGKKVKVNKDDIQKMNP). A Myosin motor domain is found at 81–776 (SKVEDMAELT…VLAHLEEERD (696 aa)). Lys-102 carries the N6-acetyllysine modification. 174–181 (GESGAGKT) serves as a coordination point for ATP. N6-acetyllysine is present on residues Lys-299, Lys-435, and Lys-613. Ser-628 bears the Phosphoserine mark. Residues 654 to 676 (LAKLMATLRNTNPNFVRCIIPNH) form an actin-binding region. Phosphotyrosine is present on Tyr-754. Residues 779-808 (ITDVIIGFQACCRGYLARKAFAKRQQQLTA) enclose the IQ domain. Residues 837–1926 (LLQVSRQEEE…LKNKLRRGDL (1090 aa)) adopt a coiled-coil conformation. Lys-850 bears the N6-succinyllysine mark. Residues Lys-860, Lys-975, and Lys-1024 each carry the N6-acetyllysine modification. A compositionally biased stretch (basic and acidic residues) spans 1035-1055 (RLRREEKQRQELEKTRRKLEG). The disordered stretch occupies residues 1035–1057 (RLRREEKQRQELEKTRRKLEGDS). Ser-1114 bears the Phosphoserine mark. The disordered stretch occupies residues 1118–1137 (EDLESERASRNKAEKQKRDL). Residues 1122 to 1137 (SERASRNKAEKQKRDL) show a composition bias toward basic and acidic residues. N6-acetyllysine is present on residues Lys-1234, Lys-1249, Lys-1357, Lys-1392, Lys-1404, Lys-1410, Lys-1459, and Lys-1638. Lys-1669 is modified (N6-succinyllysine). The residue at position 1714 (Ser-1714) is a Phosphoserine. An N6-acetyllysine mark is found at Lys-1793, Lys-1802, and Lys-1845. A disordered region spans residues 1877–1960 (RQLEEAEEEA…ADGAEAKPAE (84 aa)). An Omega-N-methylarginine modification is found at Arg-1923. Ser-1943 carries the phosphoserine modification. The span at 1948-1960 (DGKADGAEAKPAE) shows a compositional bias: basic and acidic residues.

Belongs to the TRAFAC class myosin-kinesin ATPase superfamily. Myosin family. Myosin is a hexameric protein that consists of 2 heavy chain subunits (MHC), 2 alkali light chain subunits (MLC) and 2 regulatory light chain subunits (MLC-2). Interacts with RASIP1. Interacts with DDR1. Interacts with PDLIM2. Interacts with SVIL. Interacts with HTRA3. Interacts with Myo7a. Interacts with CFAP95. Interacts with LIMCH1; independently of the integration of MYH9 into the myosin complex. Interacts with RAB3A. Interacts with ZBED4. Interacts with S100A4; this interaction increases cell motility. In terms of assembly, (Microbial infection) Interacts with herpes simplex virus 1/HHV-1 envelope glycoprotein B. ISGylated. Post-translationally, ubiquitination. In terms of tissue distribution, in the kidney, expressed in the glomeruli. Also expressed in leukocytes.

It localises to the cytoplasm. The protein localises to the cytoskeleton. It is found in the cell cortex. Its subcellular location is the cytoplasmic vesicle. The protein resides in the secretory vesicle. It localises to the cortical granule. The protein localises to the cell membrane. Its function is as follows. Cellular myosin that appears to play a role in cytokinesis, cell shape, and specialized functions such as secretion and capping. Required for cortical actin clearance prior to oocyte exocytosis. Promotes cell motility in conjunction with S100A4. During cell spreading, plays an important role in cytoskeleton reorganization, focal contact formation (in the margins but not the central part of spreading cells), and lamellipodial retraction; this function is mechanically antagonized by MYH10. (Microbial infection) Acts as a receptor for herpes simplex virus 1/HHV-1 envelope glycoprotein B. This Homo sapiens (Human) protein is Myosin-9 (MYH9).